A 90-amino-acid polypeptide reads, in one-letter code: Probable Fe(2+)-trafficking protein (90 aa).

The protein belongs to the Fe(2+)-trafficking protein family.

Its function is as follows. Could be a mediator in iron transactions between iron acquisition and iron-requiring processes, such as synthesis and/or repair of Fe-S clusters in biosynthetic enzymes. This Polaromonas sp. (strain JS666 / ATCC BAA-500) protein is Probable Fe(2+)-trafficking protein.